Here is an 80-residue protein sequence, read N- to C-terminus: Small ribosomal subunit protein bS18 (80 aa).

Belongs to the bacterial ribosomal protein bS18 family. Part of the 30S ribosomal subunit. Forms a tight heterodimer with protein bS6.

Its function is as follows. Binds as a heterodimer with protein bS6 to the central domain of the 16S rRNA, where it helps stabilize the platform of the 30S subunit. This chain is Small ribosomal subunit protein bS18, found in Staphylococcus saprophyticus subsp. saprophyticus (strain ATCC 15305 / DSM 20229 / NCIMB 8711 / NCTC 7292 / S-41).